We begin with the raw amino-acid sequence, 491 residues long: Anthranilate synthase component 1 (491 aa).

Residues Ser49 and 271 to 273 (PYL) each bind L-tryptophan. Residue 306–307 (GT) coordinates chorismate. A Mg(2+)-binding site is contributed by Glu333. Chorismate is bound by residues Tyr421, Arg441, 455–457 (GAG), and Gly457. A Mg(2+)-binding site is contributed by Glu470.

Belongs to the anthranilate synthase component I family. As to quaternary structure, heterotetramer consisting of two non-identical subunits: a beta subunit (TrpG) and a large alpha subunit (TrpE). Requires Mg(2+) as cofactor.

The catalysed reaction is chorismate + L-glutamine = anthranilate + pyruvate + L-glutamate + H(+). It functions in the pathway amino-acid biosynthesis; L-tryptophan biosynthesis; L-tryptophan from chorismate: step 1/5. With respect to regulation, feedback inhibited by tryptophan. Functionally, part of a heterotetrameric complex that catalyzes the two-step biosynthesis of anthranilate, an intermediate in the biosynthesis of L-tryptophan. In the first step, the glutamine-binding beta subunit (TrpG) of anthranilate synthase (AS) provides the glutamine amidotransferase activity which generates ammonia as a substrate that, along with chorismate, is used in the second step, catalyzed by the large alpha subunit of AS (TrpE) to produce anthranilate. In the absence of TrpG, TrpE can synthesize anthranilate directly from chorismate and high concentrations of ammonia. This chain is Anthranilate synthase component 1 (trpE), found in Neisseria meningitidis serogroup A / serotype 4A (strain DSM 15465 / Z2491).